We begin with the raw amino-acid sequence, 51 residues long: Small ribosomal subunit protein eS31 (51 aa).

Zn(2+) contacts are provided by Cys-22, Cys-25, Cys-40, and Cys-43. Residues 22–43 (CPRCGPGVFMADHGDRWACGRC) form a C4-type zinc finger.

Belongs to the eukaryotic ribosomal protein eS31 family. In terms of assembly, part of the 30S ribosomal subunit. The cofactor is Zn(2+).

This Pyrococcus abyssi (strain GE5 / Orsay) protein is Small ribosomal subunit protein eS31.